The sequence spans 218 residues: Large ribosomal subunit protein uL3 (218 aa).

The protein belongs to the universal ribosomal protein uL3 family. In terms of assembly, part of the 50S ribosomal subunit. Forms a cluster with proteins L14 and L19.

Its function is as follows. One of the primary rRNA binding proteins, it binds directly near the 3'-end of the 23S rRNA, where it nucleates assembly of the 50S subunit. This Corynebacterium diphtheriae (strain ATCC 700971 / NCTC 13129 / Biotype gravis) protein is Large ribosomal subunit protein uL3.